A 171-amino-acid polypeptide reads, in one-letter code: Shikimate kinase (171 aa).

An ATP-binding site is contributed by 14–19; that stretch reads GAGKST. Ser18 is a Mg(2+) binding site. Positions 36, 60, and 82 each coordinate substrate. Arg120 is a binding site for ATP. Arg139 contributes to the substrate binding site. Position 156 (Gln156) interacts with ATP.

It belongs to the shikimate kinase family. In terms of assembly, monomer. Requires Mg(2+) as cofactor.

The protein resides in the cytoplasm. The enzyme catalyses shikimate + ATP = 3-phosphoshikimate + ADP + H(+). It functions in the pathway metabolic intermediate biosynthesis; chorismate biosynthesis; chorismate from D-erythrose 4-phosphate and phosphoenolpyruvate: step 5/7. Catalyzes the specific phosphorylation of the 3-hydroxyl group of shikimic acid using ATP as a cosubstrate. In Shewanella frigidimarina (strain NCIMB 400), this protein is Shikimate kinase.